A 232-amino-acid polypeptide reads, in one-letter code: Ethylene-responsive transcription factor ERF025 (232 aa).

Over residues M1–Q29 the composition is skewed to polar residues. The disordered stretch occupies residues M1–S63. The segment covering S30–P50 has biased composition (low complexity). Positions I64–P120 form a DNA-binding region, AP2/ERF. Residues P213 to K232 form a disordered region.

It belongs to the AP2/ERF transcription factor family. ERF subfamily.

It localises to the nucleus. Probably acts as a transcriptional activator. Binds to the GCC-box pathogenesis-related promoter element. May be involved in the regulation of gene expression by stress factors and by components of stress signal transduction pathways. The chain is Ethylene-responsive transcription factor ERF025 (ERF025) from Arabidopsis thaliana (Mouse-ear cress).